The primary structure comprises 82 residues: Putative membrane protein insertion efficiency factor (82 aa).

The tract at residues 61–82 is disordered; sequence HEGGYDPVPKRKNKNSEGKREE.

Belongs to the UPF0161 family.

The protein resides in the cell inner membrane. Functionally, could be involved in insertion of integral membrane proteins into the membrane. The chain is Putative membrane protein insertion efficiency factor from Fusobacterium nucleatum subsp. nucleatum (strain ATCC 25586 / DSM 15643 / BCRC 10681 / CIP 101130 / JCM 8532 / KCTC 2640 / LMG 13131 / VPI 4355).